Here is a 795-residue protein sequence, read N- to C-terminus: Protein translocase subunit SecA 2 (795 aa).

Residues Gln-84, 102–106, and Asp-496 contribute to the ATP site; that span reads GEGKT.

It belongs to the SecA family. Monomer and homodimer. Part of the essential Sec protein translocation apparatus which comprises SecA, SecYEG and auxiliary proteins SecDF. Other proteins may also be involved.

Its subcellular location is the cell membrane. The protein resides in the cytoplasm. It catalyses the reaction ATP + H2O + cellular proteinSide 1 = ADP + phosphate + cellular proteinSide 2.. In terms of biological role, part of the Sec protein translocase complex. Interacts with the SecYEG preprotein conducting channel. Has a central role in coupling the hydrolysis of ATP to the transfer of proteins into and across the cell membrane, serving as an ATP-driven molecular motor driving the stepwise translocation of polypeptide chains across the membrane. In Streptococcus agalactiae serotype III (strain NEM316), this protein is Protein translocase subunit SecA 2.